A 448-amino-acid polypeptide reads, in one-letter code: Probable 3-ketoacyl-CoA thiolase (448 aa).

Cys-110 functions as the Acyl-thioester intermediate in the catalytic mechanism. Catalysis depends on proton acceptor residues His-402 and Cys-432.

Belongs to the thiolase-like superfamily. Thiolase family.

Its subcellular location is the mitochondrion. It catalyses the reaction an acyl-CoA + acetyl-CoA = a 3-oxoacyl-CoA + CoA. The protein operates within lipid metabolism; fatty acid beta-oxidation. Its function is as follows. Mitochondrial enzyme that catalyzes reactions of the mitochondrial beta-oxidation pathway. The polypeptide is Probable 3-ketoacyl-CoA thiolase (Caenorhabditis elegans).